A 405-amino-acid polypeptide reads, in one-letter code: NADH-quinone oxidoreductase subunit D (405 aa).

It belongs to the complex I 49 kDa subunit family. NDH-1 is composed of 14 different subunits. Subunits NuoB, C, D, E, F, and G constitute the peripheral sector of the complex.

Its subcellular location is the cell inner membrane. The catalysed reaction is a quinone + NADH + 5 H(+)(in) = a quinol + NAD(+) + 4 H(+)(out). Its function is as follows. NDH-1 shuttles electrons from NADH, via FMN and iron-sulfur (Fe-S) centers, to quinones in the respiratory chain. The immediate electron acceptor for the enzyme in this species is believed to be ubiquinone. Couples the redox reaction to proton translocation (for every two electrons transferred, four hydrogen ions are translocated across the cytoplasmic membrane), and thus conserves the redox energy in a proton gradient. This chain is NADH-quinone oxidoreductase subunit D, found in Ruegeria pomeroyi (strain ATCC 700808 / DSM 15171 / DSS-3) (Silicibacter pomeroyi).